The primary structure comprises 315 residues: Homoserine kinase (315 aa).

97–107 (PPARGLGSSAT) provides a ligand contact to ATP.

This sequence belongs to the GHMP kinase family. Homoserine kinase subfamily.

The protein resides in the cytoplasm. It carries out the reaction L-homoserine + ATP = O-phospho-L-homoserine + ADP + H(+). It functions in the pathway amino-acid biosynthesis; L-threonine biosynthesis; L-threonine from L-aspartate: step 4/5. In terms of biological role, catalyzes the ATP-dependent phosphorylation of L-homoserine to L-homoserine phosphate. The sequence is that of Homoserine kinase from Synechococcus sp. (strain CC9902).